Consider the following 603-residue polypeptide: Peroxisomal targeting signal receptor (603 aa).

Residue Cys10 forms a Glycyl cysteine thioester (Cys-Gly) (interchain with G-Cter in ubiquitin) linkage. The segment at 11–33 (SANSNAIAQFNKHTQQDRSLQRQ) is amphipathic helix 1 (AH1). Residue Lys22 forms a Glycyl lysine isopeptide (Lys-Gly) (interchain with G-Cter in ubiquitin) linkage. The segment at 23–49 (HTQQDRSLQRQAANQQGIVQNGQGFKK) is disordered. Positions 31–45 (QRQAANQQGIVQNGQ) are enriched in polar residues. The interval 58 to 76 (RQNMDQFMNNGPSQSNFQF) is amphipathic helix 2 (AH2). 3 consecutive short sequence motifs (wxxxF/Y motif) follow at residues 99–103 (WTNEF), 128–132 (WATEF), and 192–196 (WDNQF). The amphipathic helix 4 (AH4) stretch occupies residues 232–248 (FQEVWDSLNSEEVENDF). The short motif at 271 to 275 (WEKDF) is the WxxxF/Y motif 4 element. TPR repeat units lie at residues 304–338 (ESDPYEIGLQLMENGAKLSEAALAFEAAIQRNEGH), 339–372 (INAWLKLGEVQTQNEKEIAGISALEKCLELHPEN), 449–482 (PDVQMGLGVLFYANEDFDKTIDCFKAALSIKPDD), 484–516 (VLWNRLGASLANSNRSEEAVDAYFKALELKPTF), and 518–550 (RARYNLGVSCINIGCYKEAAEHLLSGLSMHQVE).

It belongs to the peroxisomal targeting signal receptor family. In terms of assembly, interacts (via WxxxF/Y and LVxEF motifs) with PEX14; promoting translocation through the PEX13-PEX14 docking complex. Monoubiquitinated at Cys-10 by PEX2 during PEX5 passage through the retrotranslocation channel: monoubiquitination acts as a signal for PEX5 extraction and is required for proper export from peroxisomes and recycling. When PEX5 recycling is compromised, polyubiquitinated at Lys-22 by PEX10 during its passage through the retrotranslocation channel, leading to its degradation.

Its subcellular location is the cytoplasm. The protein localises to the cytosol. It is found in the peroxisome matrix. Receptor that mediates peroxisomal import of proteins containing a C-terminal PTS1-type tripeptide peroxisomal targeting signal (SKL-type). Binds to cargo proteins containing a PTS1 peroxisomal targeting signal in the cytosol, and translocates them into the peroxisome matrix by passing through the PEX13-PEX14 docking complex along with cargo proteins. PEX5 receptor is then retrotranslocated into the cytosol, leading to release of bound cargo in the peroxisome matrix, and reset for a subsequent peroxisome import cycle. This Debaryomyces hansenii (strain ATCC 36239 / CBS 767 / BCRC 21394 / JCM 1990 / NBRC 0083 / IGC 2968) (Yeast) protein is Peroxisomal targeting signal receptor (PEX5).